We begin with the raw amino-acid sequence, 440 residues long: NADH-quinone oxidoreductase subunit H (440 aa).

The next 9 helical transmembrane spans lie at 11–31, 83–103, 123–143, 164–184, 207–227, 261–281, 299–319, 331–351, and 366–386; these read VWLIIVKVVILFVILLAWTIF, IVFNLAPVIAGIACFASWSVI, VPVAVLFILAVASIGIYGVVL, MISYEVAMGLSLVTVFIFSGS, IAGHYWLLLIPSFVIYVITMF, FLAEYINMATLSAVCTTLFLG, WWGLLWFFLKTQLVIFFFVWV, FMDLGWKVLIPVSLGWVLLVA, and VFLVVVGVILVALIVWAFMGG.

Belongs to the complex I subunit 1 family. As to quaternary structure, NDH-1 is composed of 14 different subunits. Subunits NuoA, H, J, K, L, M, N constitute the membrane sector of the complex.

The protein resides in the cell membrane. It catalyses the reaction a quinone + NADH + 5 H(+)(in) = a quinol + NAD(+) + 4 H(+)(out). NDH-1 shuttles electrons from NADH, via FMN and iron-sulfur (Fe-S) centers, to quinones in the respiratory chain. The immediate electron acceptor for the enzyme in this species is believed to be ubiquinone. Couples the redox reaction to proton translocation (for every two electrons transferred, four hydrogen ions are translocated across the cytoplasmic membrane), and thus conserves the redox energy in a proton gradient. This subunit may bind ubiquinone. The protein is NADH-quinone oxidoreductase subunit H of Cutibacterium acnes (strain DSM 16379 / KPA171202) (Propionibacterium acnes).